The primary structure comprises 264 residues: Thymidylate synthase (264 aa).

Residue Arg-21 participates in dUMP binding. His-51 provides a ligand contact to (6R)-5,10-methylene-5,6,7,8-tetrahydrofolate. Position 126–127 (126–127 (RR)) interacts with dUMP. The active-site Nucleophile is the Cys-146. DUMP contacts are provided by residues 166-169 (RSCD), Asn-177, and 207-209 (HLY). Asp-169 contacts (6R)-5,10-methylene-5,6,7,8-tetrahydrofolate. Ala-263 lines the (6R)-5,10-methylene-5,6,7,8-tetrahydrofolate pocket.

Belongs to the thymidylate synthase family. Bacterial-type ThyA subfamily. As to quaternary structure, homodimer.

Its subcellular location is the cytoplasm. It carries out the reaction dUMP + (6R)-5,10-methylene-5,6,7,8-tetrahydrofolate = 7,8-dihydrofolate + dTMP. It participates in pyrimidine metabolism; dTTP biosynthesis. Its function is as follows. Catalyzes the reductive methylation of 2'-deoxyuridine-5'-monophosphate (dUMP) to 2'-deoxythymidine-5'-monophosphate (dTMP) while utilizing 5,10-methylenetetrahydrofolate (mTHF) as the methyl donor and reductant in the reaction, yielding dihydrofolate (DHF) as a by-product. This enzymatic reaction provides an intracellular de novo source of dTMP, an essential precursor for DNA biosynthesis. This chain is Thymidylate synthase, found in Xenorhabdus nematophila (strain ATCC 19061 / DSM 3370 / CCUG 14189 / LMG 1036 / NCIMB 9965 / AN6).